We begin with the raw amino-acid sequence, 211 residues long: ATP-dependent Clp protease proteolytic subunit (211 aa).

Residue serine 106 is the Nucleophile of the active site. Histidine 131 is a catalytic residue.

It belongs to the peptidase S14 family. In terms of assembly, fourteen ClpP subunits assemble into 2 heptameric rings which stack back to back to give a disk-like structure with a central cavity, resembling the structure of eukaryotic proteasomes.

The protein localises to the cytoplasm. It catalyses the reaction Hydrolysis of proteins to small peptides in the presence of ATP and magnesium. alpha-casein is the usual test substrate. In the absence of ATP, only oligopeptides shorter than five residues are hydrolyzed (such as succinyl-Leu-Tyr-|-NHMec, and Leu-Tyr-Leu-|-Tyr-Trp, in which cleavage of the -Tyr-|-Leu- and -Tyr-|-Trp bonds also occurs).. Functionally, cleaves peptides in various proteins in a process that requires ATP hydrolysis. Has a chymotrypsin-like activity. Plays a major role in the degradation of misfolded proteins. This is ATP-dependent Clp protease proteolytic subunit from Maricaulis maris (strain MCS10) (Caulobacter maris).